A 431-amino-acid chain; its full sequence is Cyclic 2,3-diphosphoglycerate synthetase (431 aa).

It belongs to the cyclic 2,3-diphosphoglycerate synthetase family.

The protein localises to the cytoplasm. It catalyses the reaction (2R)-2,3-bisphosphoglycerate + ATP + H(+) = cyclic (2R)-2,3-bisphosphoglycerate + ADP + phosphate. Its function is as follows. Catalyzes the formation of cyclic 2,3-diphosphoglycerate (cDPG) by formation of an intramolecular phosphoanhydride bond at the expense of ATP. The sequence is that of Cyclic 2,3-diphosphoglycerate synthetase from Pyrococcus furiosus (strain ATCC 43587 / DSM 3638 / JCM 8422 / Vc1).